Here is a 347-residue protein sequence, read N- to C-terminus: MFTHLDENQQPRMVDISQKVAGDRRAVAQCIVQLPKAIKDYLTGQEIFLKKGPVIQTAIIAGTMAVKKTADLIPFCHTLPIHGCKFDINIVYQKRDYLEIFLQCAVNTNYKTGVEMEALCGVSVAALTIYDMCKSISSEIIIKNTKLIEKTGGKADVSQTPLYGLVLTGGKSRRMGKDKALINYQGQPHGQYIYDLLAKYCEQVFLSARPSQWQGTPLENLPTLVDRGESVGPMSGILTALQSYPGVNWLIIACDLAYINSTMVEKLIAQARQDLVATCYENADQGFPEALCGFYTPLALQLFTKAQNIGLHCPVKILQMADCQLIKPDNLFDIANINSPEDYGQIN.

The segment at 1–158 is molybdenum cofactor biosynthesis protein C; it reads MFTHLDENQQ…EKTGGKADVS (158 aa). Residues 75–77 and 116–117 contribute to the substrate site; these read FCH and ME. The active-site For MoaC activity is the D131. The molybdenum cofactor guanylyltransferase stretch occupies residues 159–347; sequence QTPLYGLVLT…NSPEDYGQIN (189 aa). GTP-binding positions include 167 to 169, K179, D226, and D255; that span reads LTG. D255 is a Mg(2+) binding site.

It in the N-terminal section; belongs to the MoaC family. The protein in the C-terminal section; belongs to the MobA family. Requires Mg(2+) as cofactor.

It localises to the cytoplasm. The enzyme catalyses Mo-molybdopterin + GTP + H(+) = Mo-molybdopterin guanine dinucleotide + diphosphate. The catalysed reaction is (8S)-3',8-cyclo-7,8-dihydroguanosine 5'-triphosphate = cyclic pyranopterin phosphate + diphosphate. It participates in cofactor biosynthesis; molybdopterin biosynthesis. Its function is as follows. Catalyzes the conversion of (8S)-3',8-cyclo-7,8-dihydroguanosine 5'-triphosphate to cyclic pyranopterin monophosphate (cPMP). In terms of biological role, transfers a GMP moiety from GTP to Mo-molybdopterin (Mo-MPT) cofactor (Moco or molybdenum cofactor) to form Mo-molybdopterin guanine dinucleotide (Mo-MGD) cofactor. The chain is Molybdenum cofactor biosynthesis bifunctional protein (moaC/mobA) from Synechocystis sp. (strain ATCC 27184 / PCC 6803 / Kazusa).